The primary structure comprises 61 residues: Large ribosomal subunit protein uL30 (61 aa).

It belongs to the universal ribosomal protein uL30 family. In terms of assembly, part of the 50S ribosomal subunit.

This chain is Large ribosomal subunit protein uL30, found in Frankia alni (strain DSM 45986 / CECT 9034 / ACN14a).